Reading from the N-terminus, the 380-residue chain is Asporin (380 aa).

Positions 1 to 14 (MKEYVLLLFLALCS) are cleaved as a signal peptide. The propeptide occupies 15-32 (AKPFFSPSHIALKNMMLK). Positions 35-54 (EDTDDDDDDDDDDDDDDEDN) are enriched in acidic residues. Residues 35 to 59 (EDTDDDDDDDDDDDDDDEDNSLFPT) are disordered. O-linked (GalNAc...) serine glycosylation occurs at Ser-55. Residues 66 to 102 (FFPFDLFPMCPFGCQCYSRVVHCSDLGLTSVPTNIPF) enclose the LRRNT domain. 2 disulfides stabilise this stretch: Cys-75/Cys-81 and Cys-79/Cys-88. 11 LRR repeats span residues 103–124 (DTRM…DFKG), 127–148 (SLYG…AFLT), 151–173 (KLRR…PKSL), 174–193 (AELR…TFKG), 196–219 (ALHV…AFEG), 242–263 (TLLE…DFKR), 266–287 (ELQR…SLAN), 290–312 (RVRE…PELK), 313–334 (YLQI…DFCP), 335–357 (TVPK…VKYW), and 358–380 (EMQP…NFGM). The segment at 166-212 (PLNLPKSLAELRIHENKVKKIQKDTFKGMNALHVLEMSANPLDNNGI) is interaction with TGFB1. Asn-282 carries an N-linked (GlcNAc...) asparagine glycan. Cysteines 333 and 366 form a disulfide.

This sequence belongs to the small leucine-rich proteoglycan (SLRP) family. SLRP class I subfamily. In terms of assembly, interacts with TGFB1, TGFB2 and TGFB3. DCN, BGN, and FMOD inhibit binding to TGFB1. Interacts with BMP2. Interacts in vitro with type II collagen. Interacts with type I collagen. DCN can inhibit collagen binding. In terms of processing, there is no serine/glycine dipeptide sequence expected for the attachment of O-linked glycosaminoglycans and this is probably not a proteoglycan. The O-linked polysaccharide on 54-Ser is probably the mucin type linked to GalNAc. Post-translationally, the N-linked glycan at Asn-282 is composed of variable structures of GlcNAc, mannose, fucose, HexNAc and hexose. Higher levels in osteoarthritic articular cartilage, aorta, uterus. Moderate expression in small intestine, heart, liver, bladder, ovary, stomach, and in the adrenal, thyroid, and mammary glands. Low expression in trachea, bone marrow, and lung. Colocalizes with TGFB1 in chondrocytes within osteoarthritic (OA) lesions of articular cartilage.

The protein localises to the secreted. Its subcellular location is the extracellular space. It localises to the extracellular matrix. Functionally, negatively regulates periodontal ligament (PDL) differentiation and mineralization to ensure that the PDL is not ossified and to maintain homeostasis of the tooth-supporting system. Inhibits BMP2-induced cytodifferentiation of PDL cells by preventing its binding to BMPR1B/BMP type-1B receptor, resulting in inhibition of BMP-dependent activation of SMAD proteins. Critical regulator of TGF-beta in articular cartilage and plays an essential role in cartilage homeostasis and osteoarthritis (OA) pathogenesis. Negatively regulates chondrogenesis in the articular cartilage by blocking the TGF-beta/receptor interaction on the cell surface and inhibiting the canonical TGF-beta/Smad signal. Binds calcium and plays a role in osteoblast-driven collagen biomineralization activity. This chain is Asporin (ASPN), found in Homo sapiens (Human).